A 504-amino-acid chain; its full sequence is One cut domain family member 2 (504 aa).

Disordered stretches follow at residues 29–95 (LGTL…GTAA), 166–189 (KFHH…RLSG), 274–332 (EQHL…QLEE), and 485–504 (WQDD…CTKA). Residues 35 to 56 (PAGGGSGGGGGGGGGGGGGGPG) show a composition bias toward gly residues. The segment covering 168 to 186 (HHPHPHHHPHHHHHHHHQR) has biased composition (basic residues). A DNA-binding region (CUT) is located at residues 324–410 (VATSGQLEEI…QRMSALRLAA (87 aa)). Residues 426-485 (QKKSRLVFTDLQRRTLFAIFKENKRPSKEMQITISQQLGLELTTVSNFFMNARRRSLEKW) constitute a DNA-binding region (homeobox). The segment covering 490–504 (STGGSSSTSSTCTKA) has biased composition (low complexity).

This sequence belongs to the CUT homeobox family.

It is found in the nucleus. Functionally, transcriptional activator. Activates the transcription of a number of liver genes such as HNF3B. The chain is One cut domain family member 2 (ONECUT2) from Homo sapiens (Human).